The sequence spans 99 residues: Mitochondrial import receptor subunit TOM9-2 (99 aa).

Residues Ala2–Lys51 are Cytoplasmic-facing. The chain crosses the membrane as a helical span at residues Ala52–Ile69. Residues Glu70–Leu99 are Mitochondrial intermembrane-facing.

This sequence belongs to the Tom22 family. Forms part of the preprotein translocase complex of the outer mitochondrial membrane (TOM complex) which consists of at least 6 different proteins (TOM5, TOM6, TOM7, TOM20, TOM22/TOM9 and TOM40). Expressed in young cotyledons, roots, flowers and leaves.

Its subcellular location is the mitochondrion outer membrane. Functionally, central component of the receptor complex responsible for the recognition and translocation of cytosolically synthesized mitochondrial preproteins. Together with TOM20 functions as the transit peptide receptor at the surface of the mitochondrion outer membrane and facilitates the movement of preproteins into the translocation pore. This chain is Mitochondrial import receptor subunit TOM9-2 (TOM9-2), found in Arabidopsis thaliana (Mouse-ear cress).